Here is a 115-residue protein sequence, read N- to C-terminus: Large ribosomal subunit protein bL19 (115 aa).

It belongs to the bacterial ribosomal protein bL19 family.

In terms of biological role, this protein is located at the 30S-50S ribosomal subunit interface and may play a role in the structure and function of the aminoacyl-tRNA binding site. This chain is Large ribosomal subunit protein bL19, found in Thermosipho africanus (strain TCF52B).